The sequence spans 234 residues: BTB/POZ domain-containing protein KCTD5 (234 aa).

An N-acetylalanine modification is found at Ala-2. The BTB domain maps to 44–146 (KWVRLNVGGT…LVKDKIRERD (103 aa)). The disordered stretch occupies residues 213 to 234 (PYGTTSEPSEKAKILQERGSRM). Positions 220–234 (PSEKAKILQERGSRM) are enriched in basic and acidic residues.

Homopentamer. Interacts (via C-terminus) with GRASP55/GORASP2. Interacts with CUL3 and with ubiquitinated proteins. Interacts with CRY1.

It is found in the cytoplasm. Its subcellular location is the cytosol. It localises to the nucleus. Its function is as follows. Its interaction with CUL3 suggests that it may act as a substrate adapter in some E3 ligase complex. Does not affect the function of Kv channel Kv2.1/KCNB1, Kv1.2/KCNA2, Kv4.2/KCND2 and Kv3.4/KCNC4. The sequence is that of BTB/POZ domain-containing protein KCTD5 (Kctd5) from Rattus norvegicus (Rat).